The sequence spans 418 residues: Transcription termination factor Rho (418 aa).

The region spanning 48–123 is the Rho RNA-BD domain; sequence DIYGDGVLEI…LKVNDINFDR (76 aa). ATP is bound by residues 169–174, 181–186, and R212; these read GKGQRG and KAGKTM.

Belongs to the Rho family. As to quaternary structure, homohexamer. The homohexamer assembles into an open ring structure.

In terms of biological role, facilitates transcription termination by a mechanism that involves Rho binding to the nascent RNA, activation of Rho's RNA-dependent ATPase activity, and release of the mRNA from the DNA template. This is Transcription termination factor Rho from Allochromatium vinosum (strain ATCC 17899 / DSM 180 / NBRC 103801 / NCIMB 10441 / D) (Chromatium vinosum).